A 245-amino-acid polypeptide reads, in one-letter code: 1-(5-phosphoribosyl)-5-[(5-phosphoribosylamino)methylideneamino] imidazole-4-carboxamide isomerase (245 aa).

The active-site Proton acceptor is Asp7. Asp129 serves as the catalytic Proton donor.

The protein belongs to the HisA/HisF family.

It is found in the cytoplasm. The catalysed reaction is 1-(5-phospho-beta-D-ribosyl)-5-[(5-phospho-beta-D-ribosylamino)methylideneamino]imidazole-4-carboxamide = 5-[(5-phospho-1-deoxy-D-ribulos-1-ylimino)methylamino]-1-(5-phospho-beta-D-ribosyl)imidazole-4-carboxamide. It participates in amino-acid biosynthesis; L-histidine biosynthesis; L-histidine from 5-phospho-alpha-D-ribose 1-diphosphate: step 4/9. This is 1-(5-phosphoribosyl)-5-[(5-phosphoribosylamino)methylideneamino] imidazole-4-carboxamide isomerase from Escherichia fergusonii (strain ATCC 35469 / DSM 13698 / CCUG 18766 / IAM 14443 / JCM 21226 / LMG 7866 / NBRC 102419 / NCTC 12128 / CDC 0568-73).